Reading from the N-terminus, the 494-residue chain is Probable cytosol aminopeptidase (494 aa).

Lys260 and Asp265 together coordinate Mn(2+). Lys272 is an active-site residue. 3 residues coordinate Mn(2+): Asp283, Asp342, and Glu344. The active site involves Arg346.

This sequence belongs to the peptidase M17 family. Mn(2+) serves as cofactor.

It is found in the cytoplasm. It catalyses the reaction Release of an N-terminal amino acid, Xaa-|-Yaa-, in which Xaa is preferably Leu, but may be other amino acids including Pro although not Arg or Lys, and Yaa may be Pro. Amino acid amides and methyl esters are also readily hydrolyzed, but rates on arylamides are exceedingly low.. The enzyme catalyses Release of an N-terminal amino acid, preferentially leucine, but not glutamic or aspartic acids.. Presumably involved in the processing and regular turnover of intracellular proteins. Catalyzes the removal of unsubstituted N-terminal amino acids from various peptides. In Bacillus cereus (strain ATCC 14579 / DSM 31 / CCUG 7414 / JCM 2152 / NBRC 15305 / NCIMB 9373 / NCTC 2599 / NRRL B-3711), this protein is Probable cytosol aminopeptidase.